A 629-amino-acid chain; its full sequence is Phosphomethylpyrimidine synthase (629 aa).

The tract at residues 1–30 (MTTKLKNASNLSESAQVDQQSVQPFTRSQK) is disordered. Substrate-binding positions include Asn-233, Met-262, Tyr-291, His-327, 347–349 (SRG), 388–391 (DGLR), and Glu-427. His-431 contributes to the Zn(2+) binding site. Residue Tyr-454 coordinates substrate. His-495 serves as a coordination point for Zn(2+). Residues Cys-575, Cys-578, and Cys-583 each coordinate [4Fe-4S] cluster.

Belongs to the ThiC family. As to quaternary structure, homodimer. It depends on [4Fe-4S] cluster as a cofactor.

The catalysed reaction is 5-amino-1-(5-phospho-beta-D-ribosyl)imidazole + S-adenosyl-L-methionine = 4-amino-2-methyl-5-(phosphooxymethyl)pyrimidine + CO + 5'-deoxyadenosine + formate + L-methionine + 3 H(+). The protein operates within cofactor biosynthesis; thiamine diphosphate biosynthesis. Functionally, catalyzes the synthesis of the hydroxymethylpyrimidine phosphate (HMP-P) moiety of thiamine from aminoimidazole ribotide (AIR) in a radical S-adenosyl-L-methionine (SAM)-dependent reaction. This Pseudomonas fluorescens (strain ATCC BAA-477 / NRRL B-23932 / Pf-5) protein is Phosphomethylpyrimidine synthase.